A 1225-amino-acid polypeptide reads, in one-letter code: ATP-dependent helicase/nuclease subunit A (1225 aa).

A UvrD-like helicase ATP-binding domain is found at Ala11–Arg478. An ATP-binding site is contributed by Ala32–Thr39. The region spanning Lys479–Gly790 is the UvrD-like helicase C-terminal domain. Basic and acidic residues predominate over residues Glu999–Glu1014. The disordered stretch occupies residues Glu999–Ser1018.

This sequence belongs to the helicase family. AddA subfamily. As to quaternary structure, heterodimer of AddA and AddB/RexB. Mg(2+) serves as cofactor.

It carries out the reaction Couples ATP hydrolysis with the unwinding of duplex DNA by translocating in the 3'-5' direction.. The enzyme catalyses ATP + H2O = ADP + phosphate + H(+). The heterodimer acts as both an ATP-dependent DNA helicase and an ATP-dependent, dual-direction single-stranded exonuclease. Recognizes the chi site generating a DNA molecule suitable for the initiation of homologous recombination. The AddA nuclease domain is required for chi fragment generation; this subunit has the helicase and 3' -&gt; 5' nuclease activities. This is ATP-dependent helicase/nuclease subunit A from Staphylococcus haemolyticus (strain JCSC1435).